Consider the following 175-residue polypeptide: Translation initiation factor IF-3 (175 aa).

The protein belongs to the IF-3 family. In terms of assembly, monomer.

Its subcellular location is the cytoplasm. IF-3 binds to the 30S ribosomal subunit and shifts the equilibrium between 70S ribosomes and their 50S and 30S subunits in favor of the free subunits, thus enhancing the availability of 30S subunits on which protein synthesis initiation begins. In Staphylococcus aureus (strain USA300), this protein is Translation initiation factor IF-3.